The primary structure comprises 393 residues: MAKESYKRDKPHVNIGTIGHVDHGKTTLTAAITSVLAKQGMATLREFSDIDKAPEERERGITISTAHVEYQTAKRHYAHIDCPGHADYIKNMITGAAQMDGAILVVAGTDGPMPQTREHILLARQVNVPALVVFLNKVDIADPELLELVEMELRELLTEYGFPGDDIPIIKGSALKALEGDPEAEKQIMELMDAVDSYIPQPVRDIDKPFLMPVEDVFSISGRGTVGTGRIERGRIKVGDEVEIVGIKPTAKSVVTGIEMFQKTLDEGQAGDNAGLLLRGVDKNALERGMVIAKPGSITPHTKFKAEVYILKKEEGGRHTPFFNGYRPQFYFRTTDVTGSVTLPEGVEMVMPGDNLSIDVELIAPIAMEESLRFAIREGGRTVGAGSVTKIVE.

The tr-type G domain maps to 10-203 (KPHVNIGTIG…AVDSYIPQPV (194 aa)). The segment at 19 to 26 (GHVDHGKT) is G1. Position 19-26 (19-26 (GHVDHGKT)) interacts with GTP. Thr-26 is a binding site for Mg(2+). The G2 stretch occupies residues 60 to 64 (GITIS). The G3 stretch occupies residues 81–84 (DCPG). Residues 81 to 85 (DCPGH) and 136 to 139 (NKVD) contribute to the GTP site. The segment at 136–139 (NKVD) is G4. Residues 173–175 (SAL) form a G5 region.

The protein belongs to the TRAFAC class translation factor GTPase superfamily. Classic translation factor GTPase family. EF-Tu/EF-1A subfamily. Monomer.

It is found in the cytoplasm. It carries out the reaction GTP + H2O = GDP + phosphate + H(+). GTP hydrolase that promotes the GTP-dependent binding of aminoacyl-tRNA to the A-site of ribosomes during protein biosynthesis. In Chlorobaculum tepidum (strain ATCC 49652 / DSM 12025 / NBRC 103806 / TLS) (Chlorobium tepidum), this protein is Elongation factor Tu.